The sequence spans 316 residues: tRNA dimethylallyltransferase (316 aa).

17-24 contacts ATP; the sequence is GPTASGKT. 19–24 is a substrate binding site; the sequence is TASGKT. Interaction with substrate tRNA stretches follow at residues 42–45, 166–170, 247–252, and 280–287; these read DSAL, QRLSR, RCVGYR, and KRQITWLR.

The protein belongs to the IPP transferase family. As to quaternary structure, monomer. It depends on Mg(2+) as a cofactor.

The enzyme catalyses adenosine(37) in tRNA + dimethylallyl diphosphate = N(6)-dimethylallyladenosine(37) in tRNA + diphosphate. Functionally, catalyzes the transfer of a dimethylallyl group onto the adenine at position 37 in tRNAs that read codons beginning with uridine, leading to the formation of N6-(dimethylallyl)adenosine (i(6)A). This Shigella flexneri serotype 5b (strain 8401) protein is tRNA dimethylallyltransferase.